Here is a 387-residue protein sequence, read N- to C-terminus: S-adenosylmethionine synthase (387 aa).

His17 contributes to the ATP binding site. Asp19 contributes to the Mg(2+) binding site. Glu45 contributes to the K(+) binding site. Positions 58 and 101 each coordinate L-methionine. Residues 101-111 are flexible loop; it reads QSADIAMGVDA. ATP-binding positions include 166 to 168, 231 to 232, Asp240, 246 to 247, Ala263, and Lys267; these read DAK, RF, and RK. Asp240 lines the L-methionine pocket. L-methionine is bound at residue Lys271.

It belongs to the AdoMet synthase family. In terms of assembly, homotetramer; dimer of dimers. The cofactor is Mg(2+). K(+) is required as a cofactor.

It is found in the cytoplasm. It catalyses the reaction L-methionine + ATP + H2O = S-adenosyl-L-methionine + phosphate + diphosphate. It participates in amino-acid biosynthesis; S-adenosyl-L-methionine biosynthesis; S-adenosyl-L-methionine from L-methionine: step 1/1. Catalyzes the formation of S-adenosylmethionine (AdoMet) from methionine and ATP. The overall synthetic reaction is composed of two sequential steps, AdoMet formation and the subsequent tripolyphosphate hydrolysis which occurs prior to release of AdoMet from the enzyme. The chain is S-adenosylmethionine synthase from Rhodospirillum centenum (strain ATCC 51521 / SW).